The chain runs to 117 residues: NADH-ubiquinone oxidoreductase chain 3 (117 aa).

The next 3 helical transmembrane spans lie at 1–21 (MKFIFMYFIFIILISSILLLL), 58–78 (FLMTMMFLIFDVEIILFLPII), and 86–106 (TMISYLMISIFLILLITTLIL).

The protein belongs to the complex I subunit 3 family.

It localises to the mitochondrion membrane. The catalysed reaction is a ubiquinone + NADH + 5 H(+)(in) = a ubiquinol + NAD(+) + 4 H(+)(out). Functionally, core subunit of the mitochondrial membrane respiratory chain NADH dehydrogenase (Complex I) that is believed to belong to the minimal assembly required for catalysis. Complex I functions in the transfer of electrons from NADH to the respiratory chain. The immediate electron acceptor for the enzyme is believed to be ubiquinone. This is NADH-ubiquinone oxidoreductase chain 3 (ND3) from Apis mellifera ligustica (Common honeybee).